Here is a 297-residue protein sequence, read N- to C-terminus: Protein AKTIP homolog (297 aa).

The tract at residues F13–E75 is disordered. Basic and acidic residues predominate over residues L17 to S42. Positions M59–E75 are enriched in polar residues. One can recognise a UBC core domain in the interval F84–N232.

Belongs to the ubiquitin-conjugating enzyme family. FTS subfamily.

The chain is Protein AKTIP homolog from Nematostella vectensis (Starlet sea anemone).